A 200-amino-acid polypeptide reads, in one-letter code: 3-isopropylmalate dehydratase small subunit (200 aa).

The protein belongs to the LeuD family. LeuD type 1 subfamily. In terms of assembly, heterodimer of LeuC and LeuD.

The enzyme catalyses (2R,3S)-3-isopropylmalate = (2S)-2-isopropylmalate. It participates in amino-acid biosynthesis; L-leucine biosynthesis; L-leucine from 3-methyl-2-oxobutanoate: step 2/4. Catalyzes the isomerization between 2-isopropylmalate and 3-isopropylmalate, via the formation of 2-isopropylmaleate. The chain is 3-isopropylmalate dehydratase small subunit from Actinobacillus pleuropneumoniae serotype 7 (strain AP76).